A 100-amino-acid polypeptide reads, in one-letter code: Urease subunit gamma (100 aa).

It belongs to the urease gamma subunit family. Heterotrimer of UreA (gamma), UreB (beta) and UreC (alpha) subunits. Three heterotrimers associate to form the active enzyme.

The protein localises to the cytoplasm. It catalyses the reaction urea + 2 H2O + H(+) = hydrogencarbonate + 2 NH4(+). It functions in the pathway nitrogen metabolism; urea degradation; CO(2) and NH(3) from urea (urease route): step 1/1. The polypeptide is Urease subunit gamma (Blochmanniella floridana).